Here is an 88-residue protein sequence, read N- to C-terminus: Apolipoprotein C-I (88 aa).

An N-terminal signal peptide occupies residues 1–26 (MRLILSLPVLAVVLAMVLEGPAPAQA).

The protein belongs to the apolipoprotein C1 family.

Its subcellular location is the secreted. In terms of biological role, inhibitor of lipoprotein binding to the low density lipoprotein (LDL) receptor, LDL receptor-related protein, and very low density lipoprotein (VLDL) receptor. Associates with high density lipoproteins (HDL) and the triacylglycerol-rich lipoproteins in the plasma and makes up about 10% of the protein of the VLDL and 2% of that of HDL. Appears to interfere directly with fatty acid uptake and is also the major plasma inhibitor of cholesteryl ester transfer protein (CETP). Binds free fatty acids and reduces their intracellular esterification. Modulates the interaction of APOE with beta-migrating VLDL and inhibits binding of beta-VLDL to the LDL receptor-related protein. This chain is Apolipoprotein C-I (APOC1), found in Cynopterus brachyotis (Lesser short-nosed fruit bat).